The following is a 123-amino-acid chain: UPF0738 protein BcerKBAB4_1107 (123 aa).

This sequence belongs to the UPF0738 family.

This Bacillus mycoides (strain KBAB4) (Bacillus weihenstephanensis) protein is UPF0738 protein BcerKBAB4_1107.